An 859-amino-acid chain; its full sequence is DNA mismatch repair protein MutS (859 aa).

Position 618–625 (618–625) interacts with ATP; it reads GPNMGGKS.

This sequence belongs to the DNA mismatch repair MutS family.

In terms of biological role, this protein is involved in the repair of mismatches in DNA. It is possible that it carries out the mismatch recognition step. This protein has a weak ATPase activity. The polypeptide is DNA mismatch repair protein MutS (Shewanella sediminis (strain HAW-EB3)).